A 388-amino-acid polypeptide reads, in one-letter code: Sulfate adenylyltransferase (388 aa).

It belongs to the sulfate adenylyltransferase family.

The catalysed reaction is sulfate + ATP + H(+) = adenosine 5'-phosphosulfate + diphosphate. Its pathway is sulfur metabolism; hydrogen sulfide biosynthesis; sulfite from sulfate: step 1/3. The sequence is that of Sulfate adenylyltransferase from Trichodesmium erythraeum (strain IMS101).